An 88-amino-acid chain; its full sequence is HssA/B-like protein 19 (88 aa).

It belongs to the hssA/B family.

The protein is HssA/B-like protein 19 (hssl19) of Dictyostelium discoideum (Social amoeba).